Here is a 492-residue protein sequence, read N- to C-terminus: Fumarate hydratase 1, mitochondrial (492 aa).

Residues 1 to 28 (MSIYVASRRLSGGTTVTALRYATSLRSY) constitute a mitochondrion transit peptide. Residues 127-129 (SGT), 157-160 (HPND), 167-169 (SSN), and T215 each bind substrate. H216 serves as the catalytic Proton donor/acceptor. S346 is an active-site residue. Residues S347 and 352 to 354 (KVN) each bind substrate.

It belongs to the class-II fumarase/aspartase family. Fumarase subfamily. In terms of assembly, homotetramer.

Its subcellular location is the mitochondrion. The enzyme catalyses (S)-malate = fumarate + H2O. Its pathway is carbohydrate metabolism; tricarboxylic acid cycle; (S)-malate from fumarate: step 1/1. Fumarate hydratase activity (fumarate to L-malate) is strongly inhibited by phosphoenolpyruvate, citrate, oxaloacetate, ATP and ADP. Malate dehydratase activity (malate to fumarate) is activated by oxaloacetate, pyruvate, Asn and Gln. Malate dehydratase activity (malate to fumarate) is inhibited by citrate, succinate, ADP, ATP, glucose-6P and phosphoenolpyruvate. In terms of biological role, catalyzes the reversible stereospecific interconversion of fumarate to L-malate. Catalyzes the hydration of fumarate to L-malate in the tricarboxylic acid (TCA) cycle to facilitate a transition step in the production of energy in the form of NADH. In Arabidopsis thaliana (Mouse-ear cress), this protein is Fumarate hydratase 1, mitochondrial.